Here is a 1138-residue protein sequence, read N- to C-terminus: Pesticidal crystal protein Cry7Ab (1138 aa).

The protein belongs to the delta endotoxin family.

Promotes colloidosmotic lysis by binding to the midgut epithelial cells of Coleoptera. This Bacillus thuringiensis subsp. dakota protein is Pesticidal crystal protein Cry7Ab (cry7Ab).